We begin with the raw amino-acid sequence, 521 residues long: Ribonuclease Y (521 aa).

The helical transmembrane segment at valine 3–serine 23 threads the bilayer. The region spanning threonine 211–leucine 271 is the KH domain. Residues isoleucine 337 to alanine 430 form the HD domain.

This sequence belongs to the RNase Y family.

Its subcellular location is the cell membrane. Its function is as follows. Endoribonuclease that initiates mRNA decay. The chain is Ribonuclease Y from Pelobacter propionicus (strain DSM 2379 / NBRC 103807 / OttBd1).